We begin with the raw amino-acid sequence, 312 residues long: Malate dehydrogenase (312 aa).

Residues 7–13 (GAAGGIG) and Asp34 each bind NAD(+). The substrate site is built by Arg81 and Arg87. NAD(+) contacts are provided by residues Asn94 and 117-119 (ITN). Substrate-binding residues include Asn119 and Arg153. His177 (proton acceptor) is an active-site residue. An NAD(+)-binding site is contributed by Met227.

The protein belongs to the LDH/MDH superfamily. MDH type 1 family. Homodimer.

It catalyses the reaction (S)-malate + NAD(+) = oxaloacetate + NADH + H(+). In terms of biological role, catalyzes the reversible oxidation of malate to oxaloacetate. The chain is Malate dehydrogenase from Escherichia coli (strain ATCC 8739 / DSM 1576 / NBRC 3972 / NCIMB 8545 / WDCM 00012 / Crooks).